Reading from the N-terminus, the 98-residue chain is Aspartyl/glutamyl-tRNA(Asn/Gln) amidotransferase subunit C (98 aa).

It belongs to the GatC family. Heterotrimer of A, B and C subunits.

It catalyses the reaction L-glutamyl-tRNA(Gln) + L-glutamine + ATP + H2O = L-glutaminyl-tRNA(Gln) + L-glutamate + ADP + phosphate + H(+). The catalysed reaction is L-aspartyl-tRNA(Asn) + L-glutamine + ATP + H2O = L-asparaginyl-tRNA(Asn) + L-glutamate + ADP + phosphate + 2 H(+). In terms of biological role, allows the formation of correctly charged Asn-tRNA(Asn) or Gln-tRNA(Gln) through the transamidation of misacylated Asp-tRNA(Asn) or Glu-tRNA(Gln) in organisms which lack either or both of asparaginyl-tRNA or glutaminyl-tRNA synthetases. The reaction takes place in the presence of glutamine and ATP through an activated phospho-Asp-tRNA(Asn) or phospho-Glu-tRNA(Gln). The sequence is that of Aspartyl/glutamyl-tRNA(Asn/Gln) amidotransferase subunit C from Microcystis aeruginosa (strain NIES-843 / IAM M-2473).